The following is a 144-amino-acid chain: Bacilliredoxin BLi02323/BL05224 (144 aa).

It belongs to the bacilliredoxin family.

The protein is Bacilliredoxin BLi02323/BL05224 of Bacillus licheniformis (strain ATCC 14580 / DSM 13 / JCM 2505 / CCUG 7422 / NBRC 12200 / NCIMB 9375 / NCTC 10341 / NRRL NRS-1264 / Gibson 46).